The primary structure comprises 276 residues: Rhomboid protease GlpG (276 aa).

6 helical membrane-spanning segments follow: residues 94 to 114 (GPVTWVMMIACVVVFIAMQIL), 142 to 162 (ALMHFSLMHILFNLLWWWYLG), 169 to 189 (LGSGKLIVITLISALLSGYVQ), 192 to 212 (FSGPWFGGLSGVVYALMGYVW), 229 to 249 (LIIFALIWIVAGWFDLFGMSM), and 250 to 270 (ANGAHIAGLAVGLAMAFVDSL). Catalysis depends on serine 201, which acts as the Nucleophile. Histidine 254 is an active-site residue.

The protein belongs to the peptidase S54 family.

The protein localises to the cell inner membrane. It catalyses the reaction Cleaves type-1 transmembrane domains using a catalytic dyad composed of serine and histidine that are contributed by different transmembrane domains.. Functionally, rhomboid-type serine protease that catalyzes intramembrane proteolysis. The protein is Rhomboid protease GlpG of Escherichia coli O45:K1 (strain S88 / ExPEC).